A 5209-amino-acid chain; its full sequence is E3 ubiquitin-protein ligase rnf213-alpha (5209 aa).

2 stretches are compositionally biased toward polar residues: residues 27–52 (SQSYETTQGTPHDKSQTPSIVPQITN) and 61–72 (ESKSLEIQNANV). A disordered region spans residues 27-373 (SQSYETTQGT…KRNTRSTQHI (347 aa)). The span at 85–101 (PKKKKRKKRKKEKKKKS) shows a compositional bias: basic residues. The span at 108–118 (SSLTSDLSDIS) shows a compositional bias: low complexity. Positions 119-128 (LTDKEKKMDT) are enriched in basic and acidic residues. 2 stretches are compositionally biased toward polar residues: residues 167-177 (LSASALTTGSS) and 184-195 (IGTTQKPVSASA). The span at 205-218 (QTKEEKVKCKDEGQ) shows a compositional bias: basic and acidic residues. The span at 219–243 (KSLSAKAQHTPNANVDQNANVQSDA) shows a compositional bias: polar residues. Low complexity predominate over residues 256 to 269 (KSSSVKTKPSKSTV). Composition is skewed to basic and acidic residues over residues 271-288 (DPKKTESEKQKSGERDNE) and 330-352 (MKVEKKPAGGKKDSSADQKSKES). ATP is bound by residues 2036–2041 (GVGKSL), Glu2135, Asp2193, Arg2252, Lys2535, and Ser2610. Positions 4005, 4008, 4020, 4022, 4025, 4028, 4040, 4043, 4507, and 4511 each coordinate Zn(2+). The RING-type zinc finger occupies 4005 to 4043 (CPVCMGDPRDPLSLPCDHIYCLTCIRQWLVPGQMHCPLC). The RZ-type zinc-finger motif lies at 4487–4557 (MPDDMLAVAQ…MQIQADRTQS (71 aa)). Residue Cys4518 is the Nucleophile; for E3 ubiquitin-lipopolysaccharide ligase activity of the active site. Zn(2+)-binding residues include Cys4527 and Cys4530.

Belongs to the AAA ATPase family.

The protein resides in the cytoplasm. The protein localises to the cytosol. Its subcellular location is the lipid droplet. The catalysed reaction is S-ubiquitinyl-[E2 ubiquitin-conjugating enzyme]-L-cysteine + [acceptor protein]-L-lysine = [E2 ubiquitin-conjugating enzyme]-L-cysteine + N(6)-ubiquitinyl-[acceptor protein]-L-lysine.. It carries out the reaction ATP + H2O = ADP + phosphate + H(+). The protein operates within protein modification; protein ubiquitination. Its function is as follows. Atypical E3 ubiquitin ligase that can catalyze ubiquitination of both proteins and lipids, and which is involved in various processes, such as lipid metabolism, angiogenesis and cell-autonomous immunity. Acts as a key immune sensor by catalyzing ubiquitination of the lipid A moiety of bacterial lipopolysaccharide (LPS) via its RZ-type zinc-finger: restricts the proliferation of cytosolic bacteria, such as Salmonella, by generating the bacterial ubiquitin coat through the ubiquitination of LPS. Ubiquitination of LPS triggers cell-autonomous immunity, such as antibacterial autophagy, leading to degradation of the microbial invader. Involved in lipid metabolism by regulating fat storage and lipid droplet formation; act by inhibiting the lipolytic process. Also regulates lipotoxicity by inhibiting desaturation of fatty acids. Also acts as an E3 ubiquitin-protein ligase via its RING-type zinc finger. Involved in the non-canonical Wnt signaling pathway in vascular development: acts by mediating ubiquitination and degradation of proteins downstream of rspo3, leading to inhibit the non-canonical Wnt signaling pathway and promoting vessel regression. Also has ATPase activity; ATPase activity is required for ubiquitination of LPS. Also involved in neuromuscular regulation. This is E3 ubiquitin-protein ligase rnf213-alpha from Danio rerio (Zebrafish).